The following is a 1038-amino-acid chain: Ubiquitin carboxyl-terminal hydrolase 36 (1038 aa).

2 disordered regions span residues 22-44 (LGGNSSAGSSTDQAKSGEDTNGS) and 107-148 (ANGH…PKPK). The span at 23–44 (GGNSSAGSSTDQAKSGEDTNGS) shows a compositional bias: polar residues. The USP domain occupies 172 to 480 (TGMINVGNTC…NAYIMFFELD (309 aa)). Cys181 serves as the catalytic Nucleophile. His439 (proton acceptor) is an active-site residue. Disordered stretches follow at residues 487–794 (PAAN…SKTG), 818–881 (GSPV…SNGS), 912–985 (LLVD…YNQN), and 1000–1038 (RFGGPGSAKFQQQRALQRHLSAGGGFSRRQPSAQQQQQT). 3 stretches are compositionally biased toward low complexity: residues 502–517 (STTPVPAATVSSPSPT), 546–559 (QQNQQSPQNGLQLG), and 587–606 (NGNKSSSPSSNSSSNHKSIN). Ser513 and Ser515 each carry phosphoserine. The segment covering 629-641 (TTAQLPSMPNMTE) has biased composition (polar residues). Residues Thr658 and Thr662 each carry the phosphothreonine modification. Ser672 and Ser674 each carry phosphoserine. Residues 703 to 728 (TNGHSKTNGSHTNGSASSSVHVNNSK) show a composition bias toward polar residues. Basic and acidic residues predominate over residues 729–746 (QKTDAIDEIFKSLKKSAD). Residue Ser747 is modified to Phosphoserine. Acidic residues predominate over residues 747–756 (SDEDDDEEEP). Residues 766–776 (PQKQSQSQSKA) show a composition bias toward low complexity. Residues 777 to 786 (PPSPKTPPSP) show a composition bias toward pro residues. At Ser779 the chain carries Phosphoserine. Residue Thr782 is modified to Phosphothreonine. Phosphoserine occurs at positions 785 and 819. A Phosphothreonine modification is found at Thr825. A compositionally biased stretch (polar residues) spans 832–844 (NPFSSSKPSTDSP). Ser843 is modified (phosphoserine). Thr846 is subject to Phosphothreonine. Residues 859–881 (ALKSHQQPRVGNGYQSNATSNGS) show a composition bias toward polar residues. Residues 912-923 (LLVDAREQRQRD) show a composition bias toward basic and acidic residues. The span at 942 to 953 (SGSAKGNNASNS) shows a compositional bias: low complexity.

Belongs to the peptidase C19 family. In terms of assembly, interacts with atms/PAF1, but not with CycT. Interacts (via C-terminus) with imd (via N-terminus).

It localises to the nucleus. The protein resides in the nucleolus. It is found in the cytoplasm. It catalyses the reaction Thiol-dependent hydrolysis of ester, thioester, amide, peptide and isopeptide bonds formed by the C-terminal Gly of ubiquitin (a 76-residue protein attached to proteins as an intracellular targeting signal).. In terms of biological role, hydrolase that deubiquitinates polyubiquitinated target proteins including imd. Required for preventing the constitutive activation of the imd/NF-kappa-B (Imd) signaling cascade under unchalleneged conditions. Deubiquitinates imd linked 'Lys-63' chains which leads its proteasomal degradation and consequently down-regulation of the Imd signaling cascade. Removal of the activating 'Lys-63'-linked chains is likely to enable their replacement with 'Lys-48'-linked chains which act as 'tags' the for proteasomal degradation of imd. Required for maintaining multiple types of adult stem cells, including male and female germline, epithelial follicle cell and intestinal stem cells. May function as a transcriptional repressor by continually deubiquiting histone H2B at the promoters of genes critical for cellular differentiation, thereby preventing histone H3 'Lys-4' trimethylation (H3K4me3). Controls selective autophagy activation by ubiquitinated proteins. The polypeptide is Ubiquitin carboxyl-terminal hydrolase 36 (scny) (Drosophila melanogaster (Fruit fly)).